The chain runs to 339 residues: Uroporphyrinogen decarboxylase (339 aa).

Substrate contacts are provided by residues 23–27 (RQAGR), Asp72, Tyr147, Thr202, and His315.

This sequence belongs to the uroporphyrinogen decarboxylase family. As to quaternary structure, homodimer.

The protein localises to the cytoplasm. The enzyme catalyses uroporphyrinogen III + 4 H(+) = coproporphyrinogen III + 4 CO2. Its pathway is porphyrin-containing compound metabolism; protoporphyrin-IX biosynthesis; coproporphyrinogen-III from 5-aminolevulinate: step 4/4. In terms of biological role, catalyzes the decarboxylation of four acetate groups of uroporphyrinogen-III to yield coproporphyrinogen-III. In Geotalea daltonii (strain DSM 22248 / JCM 15807 / FRC-32) (Geobacter daltonii), this protein is Uroporphyrinogen decarboxylase.